Reading from the N-terminus, the 93-residue chain is YcgL domain-containing protein swp_2294 (93 aa).

The YcgL domain occupies 1-85 (MICAVYKSLR…PVVNLLEQHK (85 aa)).

The polypeptide is YcgL domain-containing protein swp_2294 (Shewanella piezotolerans (strain WP3 / JCM 13877)).